We begin with the raw amino-acid sequence, 236 residues long: ATP synthase subunit a (236 aa).

Transmembrane regions (helical) follow at residues L17–A37, M80–I100, V114–L134, I179–I199, and F208–M228.

The protein belongs to the ATPase A chain family. F-type ATPases have 2 components, CF(1) - the catalytic core - and CF(0) - the membrane proton channel. CF(1) has five subunits: alpha(3), beta(3), gamma(1), delta(1), epsilon(1). CF(0) has three main subunits: a(1), b(2) and c(9-12). The alpha and beta chains form an alternating ring which encloses part of the gamma chain. CF(1) is attached to CF(0) by a central stalk formed by the gamma and epsilon chains, while a peripheral stalk is formed by the delta and b chains.

Its subcellular location is the cell membrane. Its function is as follows. Key component of the proton channel; it plays a direct role in the translocation of protons across the membrane. The sequence is that of ATP synthase subunit a from Anoxybacillus flavithermus (strain DSM 21510 / WK1).